The primary structure comprises 543 residues: CTP synthase (543 aa).

The segment at 1 to 265 is amidoligase domain; it reads MARYIFITGG…DDEVLAAFAI (265 aa). Ser-13 is a CTP binding site. Ser-13 is a UTP binding site. Residue 14-19 coordinates ATP; sequence SLGKGL. Position 54 (Tyr-54) interacts with L-glutamine. Asp-71 serves as a coordination point for ATP. 2 residues coordinate Mg(2+): Asp-71 and Glu-139. Residues 146-148, 186-191, and Lys-222 contribute to the CTP site; these read DIE and KTKPTQ. Residues 186–191 and Lys-222 contribute to the UTP site; that span reads KTKPTQ. An ATP-binding site is contributed by 238–240; it reads RDA. In terms of domain architecture, Glutamine amidotransferase type-1 spans 291–542; it reads TIAIVGKYTG…VQAALVQSRL (252 aa). An L-glutamine-binding site is contributed by Gly-353. Cys-380 functions as the Nucleophile; for glutamine hydrolysis in the catalytic mechanism. Residues 381–384, Glu-404, and Arg-470 contribute to the L-glutamine site; that span reads FGMQ. Active-site residues include His-515 and Glu-517.

The protein belongs to the CTP synthase family. In terms of assembly, homotetramer.

The enzyme catalyses UTP + L-glutamine + ATP + H2O = CTP + L-glutamate + ADP + phosphate + 2 H(+). It catalyses the reaction L-glutamine + H2O = L-glutamate + NH4(+). It carries out the reaction UTP + NH4(+) + ATP = CTP + ADP + phosphate + 2 H(+). It participates in pyrimidine metabolism; CTP biosynthesis via de novo pathway; CTP from UDP: step 2/2. With respect to regulation, allosterically activated by GTP, when glutamine is the substrate; GTP has no effect on the reaction when ammonia is the substrate. The allosteric effector GTP functions by stabilizing the protein conformation that binds the tetrahedral intermediate(s) formed during glutamine hydrolysis. Inhibited by the product CTP, via allosteric rather than competitive inhibition. Its function is as follows. Catalyzes the ATP-dependent amination of UTP to CTP with either L-glutamine or ammonia as the source of nitrogen. Regulates intracellular CTP levels through interactions with the four ribonucleotide triphosphates. The protein is CTP synthase of Rhodopseudomonas palustris (strain ATCC BAA-98 / CGA009).